A 188-amino-acid polypeptide reads, in one-letter code: dCTP deaminase (188 aa).

DCTP contacts are provided by residues 111–116 (KSTYAR), 135–137 (TLE), Q156, Y170, and Q180. Catalysis depends on E137, which acts as the Proton donor/acceptor.

This sequence belongs to the dCTP deaminase family. In terms of assembly, homotrimer.

The enzyme catalyses dCTP + H2O + H(+) = dUTP + NH4(+). It functions in the pathway pyrimidine metabolism; dUMP biosynthesis; dUMP from dCTP (dUTP route): step 1/2. In terms of biological role, catalyzes the deamination of dCTP to dUTP. The chain is dCTP deaminase from Polaromonas sp. (strain JS666 / ATCC BAA-500).